Reading from the N-terminus, the 349-residue chain is Hydrophobic dipeptide epimerase (349 aa).

Substrate-binding positions include threonine 127 and 153–155 (KIK). Positions 186, 212, and 237 each coordinate Mg(2+). Substrate is bound by residues lysine 259 and 309-311 (DLD).

Belongs to the mandelate racemase/muconate lactonizing enzyme family. It depends on Mg(2+) as a cofactor.

In terms of biological role, catalyzes the epimerization a variety of hydrophobic dipeptides. Epimerase activity is highest with L-Ala-L-Tyr, and lower with L-Ala-L-Met, L-Ala-L-Phe, L-Tyr-L-Ala, L-Tyr-L-Met and L-Tyr-L-Trp (in vitro). In Flavobacteria bacterium (strain MS024-2A), this protein is Hydrophobic dipeptide epimerase.